The chain runs to 208 residues: MSEGKVRVKVCGTTTLPDALHAAAAGADALGFIFAPGSKRRVTASQARGISLNVGPSVARIGVFMGQSLDEVLRTAEAARVSAVQLHGPLPGVYVAAVAGYYPVLRVLGPEELQAGNVQAATVQATPGVTLMLDAPQPGSGQPLDWAALVPHFPPGSWLAGGLGPDNVAQAIATLRPAGVDAVSRLEASPGLKNPQAVEAFIDAVKRS.

This sequence belongs to the TrpF family.

It catalyses the reaction N-(5-phospho-beta-D-ribosyl)anthranilate = 1-(2-carboxyphenylamino)-1-deoxy-D-ribulose 5-phosphate. The protein operates within amino-acid biosynthesis; L-tryptophan biosynthesis; L-tryptophan from chorismate: step 3/5. In Deinococcus radiodurans (strain ATCC 13939 / DSM 20539 / JCM 16871 / CCUG 27074 / LMG 4051 / NBRC 15346 / NCIMB 9279 / VKM B-1422 / R1), this protein is N-(5'-phosphoribosyl)anthranilate isomerase.